The sequence spans 112 residues: MKKIEAIIRPFKLNEVKLALVKEGIGGMTVIKVSGFGRQKGQTERYKGSEYSIDIIDKIKIEIIISDDKVEKIVETIIKASKTGEIGDGKIFISSIERVIRIRTNDLNFEAL.

Y51 is modified (O-UMP-tyrosine).

Belongs to the P(II) protein family. Homotrimer.

The protein resides in the plastid. The protein localises to the chloroplast. In terms of biological role, P-II indirectly controls the transcription of the glutamine synthetase gene (glnA). P-II prevents NR-II-catalyzed conversion of NR-I to NR-I-phosphate, the transcriptional activator of glnA. When P-II is uridylylated to P-II-UMP, these events are reversed. When the ratio of Gln to 2-ketoglutarate decreases, P-II is uridylylated to P-II-UMP, which causes the deadenylation of glutamine synthetase, so activating the enzyme. This is Nitrogen regulatory protein P-II (glnB) from Pyropia yezoensis (Susabi-nori).